A 635-amino-acid chain; its full sequence is Sodium- and chloride-dependent creatine transporter 1 (635 aa).

The segment at 1 to 28 (MAKKSAENGIYSVSGDEKKGPLIAPGPD) is disordered. The Cytoplasmic portion of the chain corresponds to 1 to 60 (MAKKSAENGIYSVSGDEKKGPLIAPGPDGAPAKGDGPVGLGTPGGRLAVPPRETWTRQMD). A Phosphothreonine modification is found at Thr42. A helical membrane pass occupies residues 61 to 81 (FIMSCVGFAVGLGNVWRFPYL). The Extracellular segment spans residues 82-87 (CYKNGG). A helical membrane pass occupies residues 88 to 108 (GVFLIPYVLIALVGGIPIFFL). At 109-138 (EISLGQFMKAGSINVWNICPLFKGLGYASM) the chain is on the cytoplasmic side. A helical membrane pass occupies residues 139 to 159 (VIVFYCNTYYIMVLAWGFYYL). At 160–230 (VKSFTTTLPW…LSGGLEVPGA (71 aa)) the chain is on the extracellular side. 2 N-linked (GlcNAc...) asparagine glycosylation sites follow: Asn192 and Asn197. A helical transmembrane segment spans residues 231–251 (LNWEVTLCLLACWVLVYFCVW). At 252–269 (KGVKSTGKIVYFTATFPY) the chain is on the cytoplasmic side. The helical transmembrane segment at 270–290 (VVLVVLLVRGVLLPGALDGII) threads the bilayer. Topologically, residues 291–304 (YYLKPDWSKLGSPQ) are extracellular. A helical transmembrane segment spans residues 305–325 (VWIDAGTQIFFSYAIGLGALT). The Cytoplasmic segment spans residues 326–341 (ALGSYNRFNNNCYKDA). A helical transmembrane segment spans residues 342–362 (IILALINSGTSFFAGFVVFSI). The Extracellular segment spans residues 363–394 (LGFMAAEQGVHISKVAESGPGLAFIAYPRAVT). A helical transmembrane segment spans residues 395–415 (LMPVAPLWAALFFFMLLLLGL). Residues 416 to 444 (DSQFVGVEGFITGLLDLLPASYYFRFQRE) lie on the Cytoplasmic side of the membrane. A helical membrane pass occupies residues 445–465 (ISVALCCALCFVIDLSMVTDG). Residues 466–479 (GMYVFQLFDYYSAS) lie on the Extracellular side of the membrane. The chain crosses the membrane as a helical span at residues 480–500 (GTTLLWQAFWECVVVAWVYGA). Residues 501 to 520 (DRFMDDIACMIGYRPCPWMK) are Cytoplasmic-facing. A helical transmembrane segment spans residues 521-541 (WCWSFFTPLVCMGIFIFNVVY). Residues 542–560 (YEPLVYNNTYVYPWWGEAM) lie on the Extracellular side of the membrane. N-linked (GlcNAc...) asparagine glycosylation occurs at Asn548. A helical transmembrane segment spans residues 561–581 (GWAFALSSMLCVPLHLLGCLL). Residues 582–635 (RAKGTMAERWQHLTQPIWGLHHLEYRAQDADVRGLTTLTPVSESSKVVVVESVM) are Cytoplasmic-facing. Residues Thr617 and Thr620 each carry the phosphothreonine modification. A Phosphoserine modification is found at Ser623.

Belongs to the sodium:neurotransmitter symporter (SNF) (TC 2.A.22) family. SLC6A8 subfamily. Glycosylated. In terms of tissue distribution, predominantly expressed in skeletal muscle and kidney. Also found in brain, heart, colon, testis and prostate.

It localises to the cell membrane. It is found in the apical cell membrane. The enzyme catalyses creatine(out) + chloride(out) + 2 Na(+)(out) = creatine(in) + chloride(in) + 2 Na(+)(in). Its function is as follows. Creatine:sodium symporter which mediates the uptake of creatine. Plays an important role in supplying creatine to the brain via the blood-brain barrier. The polypeptide is Sodium- and chloride-dependent creatine transporter 1 (SLC6A8) (Homo sapiens (Human)).